We begin with the raw amino-acid sequence, 183 residues long: Adenine phosphoribosyltransferase (183 aa).

The protein belongs to the purine/pyrimidine phosphoribosyltransferase family. As to quaternary structure, homodimer.

It localises to the cytoplasm. The enzyme catalyses AMP + diphosphate = 5-phospho-alpha-D-ribose 1-diphosphate + adenine. It participates in purine metabolism; AMP biosynthesis via salvage pathway; AMP from adenine: step 1/1. In terms of biological role, catalyzes a salvage reaction resulting in the formation of AMP, that is energically less costly than de novo synthesis. The polypeptide is Adenine phosphoribosyltransferase (Escherichia coli (strain K12 / MC4100 / BW2952)).